The following is a 167-amino-acid chain: MPRRPIQKKRSVLPDPIYNSISVHMLVNRVMKNGKKSLAYKIVYNTLKNIGETTQQNPVEVFEAALENVMPKVEVQPRRRAGSVQMVPSILRSTERGQATALRWILESCEKKSAKSMVSKLQTEILDAYEKKGNAIKKKEELHKIAANNAMYSNRPQIILNAVSIVS.

The protein belongs to the universal ribosomal protein uS7 family. As to quaternary structure, part of the 30S ribosomal subunit.

Its subcellular location is the plastid. It is found in the chloroplast. One of the primary rRNA binding proteins, it binds directly to 16S rRNA where it nucleates assembly of the head domain of the 30S subunit. This chain is Small ribosomal subunit protein uS7c (rps7), found in Tetradesmus obliquus (Green alga).